Here is a 366-residue protein sequence, read N- to C-terminus: Inositol 2-dehydrogenase (366 aa).

The protein belongs to the Gfo/Idh/MocA family. As to quaternary structure, homotetramer.

The enzyme catalyses myo-inositol + NAD(+) = scyllo-inosose + NADH + H(+). In terms of biological role, involved in the oxidation of myo-inositol (MI) to 2-keto-myo-inositol (2KMI or 2-inosose). This Rhodococcus jostii (strain RHA1) protein is Inositol 2-dehydrogenase.